We begin with the raw amino-acid sequence, 946 residues long: MKPLSSPLQQYWQTVVERLPEPLAEKSLSAQAKSVLTFSDFVQDSVIAHPEWLTELESQSPQADEWQHYAAWLQEALSNVSDEAGLMRELRLFRRRIMVRIAWAQTLALVTEESILQQLSHLAETLIVAARDWLYDACCREWGTPCNAQGEAQPLLILGMGKLGGGELNFSSDIDLIFAWPEHGCTQGGRRELDNAQFFTRMGQRLIKVLDQPTQDGFVYRVDMRLRPFGESGPLVLSFAALEDYYQEQGRDWERYAMVKARIMGDSEGVYANELRAMLRPFVFRRYIDFSVIQSLRNMKGMIAREVRRRGLTDNIKLGAGGIREIEFIVQVFQLIRGGREPSLQSRSLLPTLSVIAALHLLSENDAEQLRVAYLFLRRLENLLQSINDEQTQTLPSDELNRARLAWAMDFADWPQLTGALTAHMTNVRRVFNELIGDDESETQEESLSEQWRELWQDALQEDDTTPVLAHLSEDDRKQVLTLIADFRKELDKRTIGPRGRQVLDHLMPHLLSDVCAREDAAVTLSRITALLVGIVTRTTYLELLSEFPAALKHLISLCAASPMIASQLARYPLLLDELLDPNTLYQPTATDAYRDELRQYLLRVPEDDEEQQLEALRQFKQAQLLRIAAADIAGTLPVMKVSDHLTWLAEAMIDAVVQQAWVQMVARYGKPNHLNDREGRGFAVVGYGKLGGWELGYSSDLDLIFLHDCPMDAMTDGEREIDGRQFYLRLAQRIMHLFNTRTSSGILYEVDARLRPSGAAGMLVTSAEAFADYQKNEAWTWEHQALVRARVVYGDPQLTAHFDAVRREIMMLPREGKTLQTEVREMREKMRAHLGNKHRNRFDIKADEGGITDIEFITQYLVLRYAHEKPKLTRWSDNVRILELLAQNDIMEEQEAMALTRAYTTLRDELHHLALQELPGHVSEDCFTAERDLVRASWQKWLVEE.

Residues 1–440 are adenylyl removase; sequence MKPLSSPLQQ…VFNELIGDDE (440 aa). Residues 449 to 946 are adenylyl transferase; sequence SEQWRELWQD…ASWQKWLVEE (498 aa).

Belongs to the GlnE family. The cofactor is Mg(2+).

It catalyses the reaction [glutamine synthetase]-O(4)-(5'-adenylyl)-L-tyrosine + phosphate = [glutamine synthetase]-L-tyrosine + ADP. The enzyme catalyses [glutamine synthetase]-L-tyrosine + ATP = [glutamine synthetase]-O(4)-(5'-adenylyl)-L-tyrosine + diphosphate. In terms of biological role, involved in the regulation of glutamine synthetase GlnA, a key enzyme in the process to assimilate ammonia. When cellular nitrogen levels are high, the C-terminal adenylyl transferase (AT) inactivates GlnA by covalent transfer of an adenylyl group from ATP to specific tyrosine residue of GlnA, thus reducing its activity. Conversely, when nitrogen levels are low, the N-terminal adenylyl removase (AR) activates GlnA by removing the adenylyl group by phosphorolysis, increasing its activity. The regulatory region of GlnE binds the signal transduction protein PII (GlnB) which indicates the nitrogen status of the cell. The sequence is that of Bifunctional glutamine synthetase adenylyltransferase/adenylyl-removing enzyme from Shigella boydii serotype 4 (strain Sb227).